The primary structure comprises 413 residues: Putative zinc finger protein B0310.2 (413 aa).

Disordered stretches follow at residues 130–151 (PIFS…KRSL) and 259–290 (VESD…TGPM). Residues 270-281 (PSPSTGDITENE) show a composition bias toward polar residues. 2 C2H2-type zinc fingers span residues 306-330 (FICM…MFIH) and 336-358 (HTCP…KKTH).

Its subcellular location is the nucleus. The polypeptide is Putative zinc finger protein B0310.2 (Caenorhabditis elegans).